The chain runs to 325 residues: Lipoyl synthase (325 aa).

Residues Cys-71, Cys-76, Cys-82, Cys-97, Cys-101, Cys-104, and Ser-311 each contribute to the [4Fe-4S] cluster site. The Radical SAM core domain maps to 83–300 (FSGGTATFMI…ERQALAMGFT (218 aa)).

It belongs to the radical SAM superfamily. Lipoyl synthase family. [4Fe-4S] cluster is required as a cofactor.

It is found in the cytoplasm. The enzyme catalyses [[Fe-S] cluster scaffold protein carrying a second [4Fe-4S](2+) cluster] + N(6)-octanoyl-L-lysyl-[protein] + 2 oxidized [2Fe-2S]-[ferredoxin] + 2 S-adenosyl-L-methionine + 4 H(+) = [[Fe-S] cluster scaffold protein] + N(6)-[(R)-dihydrolipoyl]-L-lysyl-[protein] + 4 Fe(3+) + 2 hydrogen sulfide + 2 5'-deoxyadenosine + 2 L-methionine + 2 reduced [2Fe-2S]-[ferredoxin]. Its pathway is protein modification; protein lipoylation via endogenous pathway; protein N(6)-(lipoyl)lysine from octanoyl-[acyl-carrier-protein]: step 2/2. Catalyzes the radical-mediated insertion of two sulfur atoms into the C-6 and C-8 positions of the octanoyl moiety bound to the lipoyl domains of lipoate-dependent enzymes, thereby converting the octanoylated domains into lipoylated derivatives. The polypeptide is Lipoyl synthase (Methylobacillus flagellatus (strain ATCC 51484 / DSM 6875 / VKM B-1610 / KT)).